The chain runs to 497 residues: Nuclear pore complex protein npp-16 (497 aa).

Disordered stretches follow at residues 76-95 (VPRR…APRK), 210-308 (TKKS…SAPK), and 359-379 (MENQ…GEYV). 2 stretches are compositionally biased toward basic and acidic residues: residues 231 to 240 (KDGDKPKETP) and 250 to 260 (KPAEPSEEPKA). Positions 390–497 (EPDAVLSSKV…FTDKILEVAV (108 aa)) are ranBD1.

As to quaternary structure, interacts with importin beta imb-1. Interacts with DNA-directed RNA polymerase III subunit rpc-1. Interacts with TATA-box-binding protein tbp-1. Interacts with GTF3C5 homolog tftc-5. Interacts with GTF3C3 homolog tftc-3.

It is found in the nucleus. Its subcellular location is the nuclear pore complex. It localises to the nucleus membrane. Its function is as follows. Component of the nuclear pore complex. Plays a direct role in nuclear protein import. Required for anoxia-induced prophase arrest; may function in concert with cdk-1 to arrest prophase blastomeres in response to anoxia. In Caenorhabditis elegans, this protein is Nuclear pore complex protein npp-16.